A 2061-amino-acid chain; its full sequence is Myoferlin (2061 aa).

Residues 1–101 enclose the C2 1 domain; the sequence is MLRVIVESAS…TGDQSRSLPY (101 aa). Residues 1-2025 are Cytoplasmic-facing; that stretch reads MLRVIVESAS…MKFIVWRRFK (2025 aa). A disordered region spans residues 123–172; that stretch reads GYDPPSAPHPNDLSGPSVPGMGGDGEEDEGDEDRLDNAVRGPGPKGPVGT. Positions 146–156 are enriched in acidic residues; it reads DGEEDEGDEDR. Position 174 is a phosphoserine (Ser174). C2 domains lie at 181-300 and 339-474; these read RLTK…RKWL and DSDD…VEDF. The necessary for interaction with EHD2 stretch occupies residues 186 to 281; that stretch reads KNSRRMLSNK…RADCLMGEFK (96 aa). The disordered stretch occupies residues 323–342; that stretch reads LGTGDEPPPERRDRDNDSDD. Ca(2+) contacts are provided by Asp390, Asp396, Asp444, Asp446, and Asp452. At Lys553 the chain carries N6-acetyllysine. A Phosphoserine modification is found at Ser729. Lys884 carries the post-translational modification N6-acetyllysine. Residues 938–967 form a disordered region; the sequence is ESRYPGGDWKPAEDTYTDANGDKAASPSEL. C2 domains lie at 1123 to 1251 and 1282 to 1410; these read GANT…LLWH and LPPQ…GKED. Ca(2+) contacts are provided by Asp1155, Asp1161, Asp1217, and Asp1219. Lys1507 bears the N6-acetyllysine mark. C2 domains lie at 1536 to 1654 and 1772 to 1920; these read PAPP…SHCG and GPPG…EKCR. Asp1569, Asp1575, Asp1624, Asp1626, Asp1891, Ser1894, and Asp1897 together coordinate Ca(2+). Residue Ser1915 is modified to Phosphoserine. A helical membrane pass occupies residues 2026 to 2046; the sequence is WVIIGLLFLLILLLFVAVLLY. At 2047–2061 the chain is on the extracellular side; the sequence is SLPNYLSMKIVKPNV.

It belongs to the ferlin family. Interacts with DNM2 and KDR. Interacts with EHD1. Interacts with EHD2; the interaction is direct. Interacts with RIPOR2. It depends on Ca(2+) as a cofactor. Expressed in myoblast and endothelial cells (at protein level). Highly expressed in cardiac and skeletal muscles. Also present in lung, and at very low levels in kidney, placenta and brain.

It is found in the cell membrane. Its subcellular location is the nucleus membrane. The protein localises to the cytoplasmic vesicle membrane. Calcium/phospholipid-binding protein that plays a role in the plasmalemma repair mechanism of endothelial cells that permits rapid resealing of membranes disrupted by mechanical stress. Involved in endocytic recycling. Implicated in VEGF signal transduction by regulating the levels of the receptor KDR. This is Myoferlin (MYOF) from Homo sapiens (Human).